We begin with the raw amino-acid sequence, 20 residues long: Fibrinogen (20 aa).

Residues 1–20 (LHSNLEYQYRYSGRVASGIP) form the Vitellogenin domain.

Secreted into the hemolymph.

The protein localises to the secreted. It localises to the extracellular space. Functionally, involved in lipid transport. Plays a role in hemolymph clotting. May be involved in wound healing in the cuticle. This chain is Fibrinogen, found in Pacifastacus leniusculus (Signal crayfish).